The primary structure comprises 370 residues: MESSVQNKPIIELRSITKSYGDKTIIENFNLTINNGEFLTILGPSGCGKTTVLRLLAGLEELDSGNIILDGEDITHVPAEQRHVNTVFQSYALFPHMTIFENVAFGLRMQKVPNEEIKPRVLEALRMVQLEEYAYSKPAQLSGGQQQRIAIARAVVNKPKVLLLDESLSALDYKLRKQMQNELKALQRKLGITFIFVTHDQEEALTMSDRIIVLRKGHIQQDGSPREIYEEPKNLFVAKFIGEINIFNATVLTRVDEKRVRANVEGRVCDIYTNLDVVAEQKLKVLLRPEDILIEELDENQSSKAIIGHVADRNYKGMTLESNITLDHNGMTVLVSEFFNEDDPNIDHSLGQKVALTWHEGWEVVLSDEE.

The region spanning 11 to 241 (IELRSITKSY…PKNLFVAKFI (231 aa)) is the ABC transporter domain. Position 43–50 (43–50 (GPSGCGKT)) interacts with ATP.

This sequence belongs to the ABC transporter superfamily. Spermidine/putrescine importer (TC 3.A.1.11.1) family. As to quaternary structure, the complex is composed of two ATP-binding proteins (PotA), two transmembrane proteins (PotB and PotC) and a solute-binding protein (PotD).

Its subcellular location is the cell inner membrane. It carries out the reaction ATP + H2O + polyamine-[polyamine-binding protein]Side 1 = ADP + phosphate + polyamineSide 2 + [polyamine-binding protein]Side 1.. Its function is as follows. Part of the ABC transporter complex PotABCD involved in spermidine/putrescine import. Responsible for energy coupling to the transport system. This chain is Spermidine/putrescine import ATP-binding protein PotA, found in Pasteurella multocida (strain Pm70).